Here is a 262-residue protein sequence, read N- to C-terminus: Sepiapterin reductase (262 aa).

Met-1 carries the post-translational modification N-acetylmethionine. 15–21 (GASRGFG) lines the NADP(+) pocket. Ser-33 is modified (phosphoserine). 43-44 (RS) serves as a coordination point for NADP(+). Position 46 is a phosphoserine; by CaMK2; in vitro (Ser-46). 70 to 71 (DL) is an NADP(+) binding site. Residues 158–159 (SL) and Tyr-171 contribute to the substrate site. Lys-175 serves as a coordination point for NADP(+). Phosphoserine; by CaMK2; in vitro is present on Ser-196. Gly-200 contacts substrate. Residue 202-207 (LDTNMQ) coordinates NADP(+). A Phosphoserine; by CaMK2; in vitro modification is found at Ser-214. Asp-258 provides a ligand contact to substrate.

The protein belongs to the sepiapterin reductase family. As to quaternary structure, homodimer. In terms of processing, in vitro phosphorylation of Ser-46, Ser-196 and Ser-214 by CaMK2 does not change kinetic parameters.

The protein localises to the cytoplasm. It carries out the reaction L-erythro-7,8-dihydrobiopterin + NADP(+) = L-sepiapterin + NADPH + H(+). The enzyme catalyses (6R)-L-erythro-5,6,7,8-tetrahydrobiopterin + 2 NADP(+) = 6-pyruvoyl-5,6,7,8-tetrahydropterin + 2 NADPH + 2 H(+). Catalyzes the final one or two reductions in tetra-hydrobiopterin biosynthesis to form 5,6,7,8-tetrahydrobiopterin. In Rattus norvegicus (Rat), this protein is Sepiapterin reductase (Spr).